The sequence spans 321 residues: MFAPHTNIMSIARVLIIIASISVICITLFISRPVTRESSIIIAPKTRDMRAEQIRLFALNAMVKANSHTLPPRSKNISAKNLCSRRMTCAPHNRRYETMLKVSPKYKMVNCVVQKSMSTMMTGAMCYLYDEKAYADSGRTFDDEFSTRFCKNKNEFSSVNAVRDAYNISFVKTDWLFSMITRDPIDRFVSGYVDRCVRISQKNETGQCNGCGLNMTCFIENEYKRLMEISFKRKTHRTMEDAHFFPQIWHCDLNEDLEFFEFIQYSNNPETTMMPQLEEMLKRQKVPSDSIRFIKNELLYKKSSHSTTGTPASRFYRSRYS.

A helical transmembrane segment spans residues 11–31; that stretch reads IARVLIIIASISVICITLFIS.

This sequence to C.elegans C41C4.1 and C18B2.2.

It localises to the membrane. The sequence is that of Putative sulfotransferase vep-2 from Caenorhabditis elegans.